Consider the following 119-residue polypeptide: Acidic phospholipase A2 natratoxin (119 aa).

7 disulfide bridges follow: C11–C71, C26–C118, C28–C44, C43–C99, C50–C92, C60–C85, and C78–C90. The Ca(2+) site is built by Y27, G29, and G31. The active site involves H47. D48 lines the Ca(2+) pocket. D93 is a catalytic residue.

It belongs to the phospholipase A2 family. Group I subfamily. D49 sub-subfamily. Requires Ca(2+) as cofactor. As to expression, expressed by the venom gland.

It localises to the secreted. The catalysed reaction is a 1,2-diacyl-sn-glycero-3-phosphocholine + H2O = a 1-acyl-sn-glycero-3-phosphocholine + a fatty acid + H(+). Snake venom phospholipase A2 (PLA2) that has an effectively inhibitory effect on A-type K(+) currents (Kv/KCN) in acutely dissociated rat dorsal root ganglion (DRG) neurons. This inhibitory effect is independent of its enzymatic activity. PLA2 catalyzes the calcium-dependent hydrolysis of the 2-acyl groups in 3-sn-phosphoglycerides. The chain is Acidic phospholipase A2 natratoxin from Naja atra (Chinese cobra).